Consider the following 208-residue polypeptide: Imidazoleglycerol-phosphate dehydratase (208 aa).

Belongs to the imidazoleglycerol-phosphate dehydratase family.

The protein resides in the cytoplasm. It carries out the reaction D-erythro-1-(imidazol-4-yl)glycerol 3-phosphate = 3-(imidazol-4-yl)-2-oxopropyl phosphate + H2O. It functions in the pathway amino-acid biosynthesis; L-histidine biosynthesis; L-histidine from 5-phospho-alpha-D-ribose 1-diphosphate: step 6/9. The sequence is that of Imidazoleglycerol-phosphate dehydratase from Arthrobacter sp. (strain FB24).